The chain runs to 475 residues: V-type ATP synthase beta chain (475 aa).

The protein belongs to the ATPase alpha/beta chains family.

Functionally, produces ATP from ADP in the presence of a proton gradient across the membrane. The V-type beta chain is a regulatory subunit. The chain is V-type ATP synthase beta chain from Anaeromyxobacter dehalogenans (strain 2CP-C).